We begin with the raw amino-acid sequence, 921 residues long: Translation initiation factor IF-2 (921 aa).

A disordered region spans residues 1–296; it reads MADQNTPGDK…PGPQKQRGRL (296 aa). The segment covering 80-89 has biased composition (low complexity); the sequence is RPSGPRPSGG. Over residues 117 to 183 the composition is skewed to basic and acidic residues; that stretch reads ARVRDLEERR…AKKRFGEGEA (67 aa). Low complexity-rich tracts occupy residues 184–237 and 248–257; these read PRPA…ARPA and GRAPAAVAAG. A tr-type G domain is found at 417–586; it reads PRSPVVTVMG…MIALQADILD (170 aa). Residues 426–433 are G1; that stretch reads GHVDHGKT. 426 to 433 contributes to the GTP binding site; it reads GHVDHGKT. Positions 451 to 455 are G2; that stretch reads GITQH. A G3 region spans residues 474 to 477; it reads DTPG. Residues 474-478 and 528-531 contribute to the GTP site; these read DTPGH and NKID. The G4 stretch occupies residues 528 to 531; the sequence is NKID. The interval 564-566 is G5; sequence SAK.

This sequence belongs to the TRAFAC class translation factor GTPase superfamily. Classic translation factor GTPase family. IF-2 subfamily.

It localises to the cytoplasm. Functionally, one of the essential components for the initiation of protein synthesis. Protects formylmethionyl-tRNA from spontaneous hydrolysis and promotes its binding to the 30S ribosomal subunits. Also involved in the hydrolysis of GTP during the formation of the 70S ribosomal complex. The polypeptide is Translation initiation factor IF-2 (Bradyrhizobium sp. (strain ORS 278)).